Reading from the N-terminus, the 382-residue chain is Pectinesterase (382 aa).

The N-terminal stretch at 1–16 (MKIIVLLLLAVVLASA) is a signal peptide. Residues cysteine 153 and cysteine 164 are joined by a disulfide bond. A glycan (N-linked (GlcNAc...) asparagine) is linked at asparagine 179. Residue glutamine 193 coordinates substrate. The active-site Proton donor is the aspartate 216. The active-site Nucleophile is aspartate 242. The substrate site is built by arginine 306 and tryptophan 308. Asparagine 340 and asparagine 376 each carry an N-linked (GlcNAc...) asparagine glycan.

Belongs to the pectinesterase family. As to expression, expressed throughout the midgut with particularly strong expression in the ventriculus.

It localises to the secreted. It catalyses the reaction [(1-&gt;4)-alpha-D-galacturonosyl methyl ester](n) + n H2O = [(1-&gt;4)-alpha-D-galacturonosyl](n) + n methanol + n H(+). The protein operates within glycan metabolism; pectin degradation; 2-dehydro-3-deoxy-D-gluconate from pectin: step 1/5. Pectinesterase which probably plays an important role in the digestion of plant cell walls. In Sitophilus oryzae (Rice weevil), this protein is Pectinesterase.